A 70-amino-acid chain; its full sequence is Small ribosomal subunit protein bS21 (70 aa).

It belongs to the bacterial ribosomal protein bS21 family.

This is Small ribosomal subunit protein bS21 from Wolinella succinogenes (strain ATCC 29543 / DSM 1740 / CCUG 13145 / JCM 31913 / LMG 7466 / NCTC 11488 / FDC 602W) (Vibrio succinogenes).